The following is a 200-amino-acid chain: Adenylate kinase (200 aa).

An ATP-binding site is contributed by 10-15 (GAGKGT). The segment at 30–59 (STGDLFRANISQQTELGKLAKSYMDAGNLV) is NMP. Residues threonine 31, arginine 36, 57–59 (NLV), 84–87 (GFPR), and glutamine 91 each bind AMP. The segment at 125 to 163 (GRRVCRNDSAHVFHVTYTPPKKEGVCDVCGGELYQRDDD) is LID. ATP contacts are provided by residues arginine 126 and 136–137 (VF). Residues arginine 160 and arginine 171 each coordinate AMP.

The protein belongs to the adenylate kinase family. In terms of assembly, monomer.

It is found in the cytoplasm. It catalyses the reaction AMP + ATP = 2 ADP. It participates in purine metabolism; AMP biosynthesis via salvage pathway; AMP from ADP: step 1/1. In terms of biological role, catalyzes the reversible transfer of the terminal phosphate group between ATP and AMP. Plays an important role in cellular energy homeostasis and in adenine nucleotide metabolism. This is Adenylate kinase from Streptomyces lividans.